The following is a 521-amino-acid chain: Probable feruloyl esterase B (521 aa).

A signal peptide spans 1–17 (MKVSSLLSVALPGAALA). 2 disulfide bridges follow: Cys-26–Cys-72 and Cys-61–Cys-111. Residues Asn-37, Asn-51, Asn-77, Asn-95, Asn-144, and Asn-177 are each glycosylated (N-linked (GlcNAc...) asparagine). 3 cysteine pairs are disulfide-bonded: Cys-184–Cys-438, Cys-253–Cys-270, and Cys-279–Cys-288. The active-site Acyl-ester intermediate is the Ser-185. 5 residues coordinate Ca(2+): Asp-254, Asp-257, Ala-259, Asp-261, and Ile-263. Residues Asn-284, Asn-347, Asn-352, and Asn-378 are each glycosylated (N-linked (GlcNAc...) asparagine). Residues Asp-397 and His-437 each act as charge relay system in the active site. Asn-488 and Asn-511 each carry an N-linked (GlcNAc...) asparagine glycan. Residues Cys-498 and Cys-520 are joined by a disulfide bond.

Belongs to the tannase family.

The protein resides in the secreted. The catalysed reaction is feruloyl-polysaccharide + H2O = ferulate + polysaccharide.. In terms of biological role, involved in degradation of plant cell walls. Hydrolyzes the feruloyl-arabinose ester bond in arabinoxylans as well as the feruloyl-galactose and feruloyl-arabinose ester bonds in pectin. The chain is Probable feruloyl esterase B (faeB) from Aspergillus niger (strain ATCC MYA-4892 / CBS 513.88 / FGSC A1513).